The chain runs to 233 residues: Large ribosomal subunit protein uL1 (233 aa).

This sequence belongs to the universal ribosomal protein uL1 family. In terms of assembly, part of the 50S ribosomal subunit.

Its function is as follows. Binds directly to 23S rRNA. The L1 stalk is quite mobile in the ribosome, and is involved in E site tRNA release. Protein L1 is also a translational repressor protein, it controls the translation of the L11 operon by binding to its mRNA. This chain is Large ribosomal subunit protein uL1, found in Shewanella frigidimarina (strain NCIMB 400).